The primary structure comprises 144 residues: Large ribosomal subunit protein uL16 (144 aa).

Over residues 1 to 16 (MLQPKKTKFRRQQKGR) the composition is skewed to basic residues. Residues 1-22 (MLQPKKTKFRRQQKGRMKGEAQ) are disordered.

The protein belongs to the universal ribosomal protein uL16 family. As to quaternary structure, part of the 50S ribosomal subunit.

Functionally, binds 23S rRNA and is also seen to make contacts with the A and possibly P site tRNAs. This Parabacteroides distasonis (strain ATCC 8503 / DSM 20701 / CIP 104284 / JCM 5825 / NCTC 11152) protein is Large ribosomal subunit protein uL16.